We begin with the raw amino-acid sequence, 279 residues long: HTH-type transcriptional regulator HdfR (279 aa).

The region spanning 1 to 58 is the HTH lysR-type domain; the sequence is MDTELLKTFLEVSRTRHFGRAAESLYLTQSAVSFRIRQLENQLGVNLFTRHRNNIRLT. The H-T-H motif DNA-binding region spans 18-37; that stretch reads FGRAAESLYLTQSAVSFRIR.

This sequence belongs to the LysR transcriptional regulatory family.

Negatively regulates the transcription of the flagellar master operon flhDC by binding to the upstream region of the operon. This is HTH-type transcriptional regulator HdfR from Escherichia fergusonii (strain ATCC 35469 / DSM 13698 / CCUG 18766 / IAM 14443 / JCM 21226 / LMG 7866 / NBRC 102419 / NCTC 12128 / CDC 0568-73).